A 420-amino-acid chain; its full sequence is Lactosylceramide alpha-2,3-sialyltransferase (420 aa).

The interval 1–39 (MRKKAAGGAERRPLKPRTEAAAAAPAGRAMPSDHSRMKL) is disordered. Residues 1-67 (MRKKAAGGAE…MRRPNLLLKD (67 aa)) lie on the Cytoplasmic side of the membrane. A compositionally biased stretch (basic and acidic residues) spans 9–18 (AERRPLKPRT). The segment covering 20–29 (AAAAAPAGRA) has biased composition (low complexity). Residues 68–88 (ILKCTLLLFGVWILFYILKLN) form a helical membrane-spanning segment. Residues 89–420 (HTTEECDMKR…DLSGGIHSEF (332 aa)) lie on the Lumenal side of the membrane. A disulfide bridge links cysteine 197 with cysteine 355. An N-linked (GlcNAc...) asparagine glycan is attached at asparagine 238.

Belongs to the glycosyltransferase 29 family.

The protein localises to the golgi apparatus membrane. It catalyses the reaction a beta-D-Gal-(1-&gt;4)-beta-D-Glc-(1&lt;-&gt;1)-Cer(d18:1(4E)) + CMP-N-acetyl-beta-neuraminate = a ganglioside GM3 (d18:1(4E)) + CMP + H(+). The enzyme catalyses ganglioside GA2 (d18:1(4E)/18:0) + CMP-N-acetyl-beta-neuraminate = ganglioside GM2 (d18:1(4E)/18:0) + CMP + H(+). It carries out the reaction a beta-D-Gal-(1&lt;-&gt;1')-ceramide + CMP-N-acetyl-beta-neuraminate = N-acetyl-alpha-neuraminosyl-(2-&gt;3)-beta-D-galactosyl-(1&lt;-&gt;1')-ceramide + CMP + H(+). The catalysed reaction is ganglioside GA1 (d18:1(4E)/18:0) + CMP-N-acetyl-beta-neuraminate = ganglioside GM1 (d18:1(4E)/18:0) + CMP + H(+). Transfers the sialyl group (N-acetyl-alpha-neuraminyl or NeuAc) from CMP-NeuAc to the non-reducing terminal galactose (Gal) of glycosphingolipids forming gangliosides (important molecules involved in the regulation of multiple cellular processes, including cell proliferation and differentiation, apoptosis, embryogenesis, development, and oncogenesis). Mainly involved in the biosynthesis of ganglioside GM3 but can also use different glycolipids as substrate acceptors such as D-galactosylceramide (GalCer), asialo-GM2 (GA2) and asialo-GM1 (GA1), although less preferentially than beta-D-Gal-(1-&gt;4)-beta-D-Glc-(1&lt;-&gt;1)-Cer (LacCer). This is Lactosylceramide alpha-2,3-sialyltransferase (ST3GAL5) from Bos taurus (Bovine).